Consider the following 370-residue polypeptide: Elongation factor Ts, mitochondrial (370 aa).

The transit peptide at 1-29 (MALLSAAPRALRLPRRLPLGAALPALRAL) directs the protein to the mitochondrion.

This sequence belongs to the EF-Ts family.

It localises to the mitochondrion. Functionally, associates with the EF-Tu.GDP complex and induces the exchange of GDP to GTP. It remains bound to the aminoacyl-tRNA.EF-Tu.GTP complex up to the GTP hydrolysis stage on the ribosome. The polypeptide is Elongation factor Ts, mitochondrial (Cryptococcus neoformans var. neoformans serotype D (strain B-3501A) (Filobasidiella neoformans)).